Reading from the N-terminus, the 255-residue chain is tRNA pseudouridine synthase A (255 aa).

Catalysis depends on D53, which acts as the Nucleophile. Y113 serves as a coordination point for substrate.

This sequence belongs to the tRNA pseudouridine synthase TruA family. Homodimer.

It catalyses the reaction uridine(38/39/40) in tRNA = pseudouridine(38/39/40) in tRNA. Functionally, formation of pseudouridine at positions 38, 39 and 40 in the anticodon stem and loop of transfer RNAs. The polypeptide is tRNA pseudouridine synthase A (Acidiphilium cryptum (strain JF-5)).